Reading from the N-terminus, the 586-residue chain is MKQSVSAEQIELKSSLPGSKKVYVDGPREGMKVPMREIEQSETNGVPNPPIRVYDTSGPYTDPEYKVELEKGIPTPRHSWILGRGDVEAYEGREVKPEDDGVKVASKHTPVFPQMDRKPLRAKQGANVTQMHYARNGIITSEMEYVAIREGVEPEFVRKEIAEGRAILPANINHPEAEPMIIGRNFHVKVNANIGNSAVSSSIAEEVEKMTWATRWGADTIMDLSTGKNIHTTREWIIRNAPVPVGTVPIYQALEKVNGIAEDLTWEVYRDTLIEQAEQGVDYFTIHAGVLLRYIPITAKRTTGIVSRGGSIMAQWCLFHHKENFLYTHFEEICEIMKQYDVSFSLGDGLRPGSIADANDEAQFSELETLGELTKIAWKHDVQVMIEGPGHVPMHLIKENMEKELDICQGAPFYTLGPLTTDIAPGYDHITSAIGAAMIGWFGTAMLCYVTPKEHLGLPNKDDVRTGVITYKIAAHAADLAKGHKTAHQRDDALSKARFEFRWRDQFNLSLDPERAMEYHDETLPAEGAKTAHFCSMCGPKFCSMRISHDIREYAKENDLETTEAIEKGMKEKAEEFKEAGSHLYQ.

Positions methionine 1–proline 59 are disordered. The segment covering valine 22 to glutamate 39 has biased composition (basic and acidic residues). Residues asparagine 193, methionine 222, tyrosine 251, histidine 287, serine 307–glycine 309, aspartate 348–arginine 351, and glutamate 387 contribute to the substrate site. Histidine 391 is a binding site for Zn(2+). Tyrosine 414 contributes to the substrate binding site. Histidine 455 provides a ligand contact to Zn(2+). [4Fe-4S] cluster is bound by residues cysteine 535, cysteine 538, and cysteine 543.

This sequence belongs to the ThiC family. It depends on [4Fe-4S] cluster as a cofactor.

It catalyses the reaction 5-amino-1-(5-phospho-beta-D-ribosyl)imidazole + S-adenosyl-L-methionine = 4-amino-2-methyl-5-(phosphooxymethyl)pyrimidine + CO + 5'-deoxyadenosine + formate + L-methionine + 3 H(+). Its pathway is cofactor biosynthesis; thiamine diphosphate biosynthesis. In terms of biological role, catalyzes the synthesis of the hydroxymethylpyrimidine phosphate (HMP-P) moiety of thiamine from aminoimidazole ribotide (AIR) in a radical S-adenosyl-L-methionine (SAM)-dependent reaction. This is Phosphomethylpyrimidine synthase from Bacillus cereus (strain ATCC 14579 / DSM 31 / CCUG 7414 / JCM 2152 / NBRC 15305 / NCIMB 9373 / NCTC 2599 / NRRL B-3711).